The following is a 465-amino-acid chain: Gamma-aminobutyric acid receptor subunit rho-2 (465 aa).

A signal peptide spans 1–20 (MPYFSRLILFLFCLVVLVES). Over 21–260 (RKPKKRRWTG…LYINFTLRRH (240 aa)) the chain is Extracellular. Arg-105 serves as a coordination point for 4-aminobutanoate. Asn-120 is a glycosylation site (N-linked (GlcNAc...) asparagine). 4-aminobutanoate is bound at residue Ser-169. Cys-178 and Cys-192 are oxidised to a cystine. Position 197 (Glu-197) interacts with 4-aminobutanoate. Asn-254 carries N-linked (GlcNAc...) asparagine glycosylation. The chain crosses the membrane as a helical span at residues 261-281 (IFFFLLQTYFPATLMVMLSWV). Topologically, residues 282–293 (SFWIDRRAVPAR) are cytoplasmic. The helical transmembrane segment at 294–314 (VSLGITTVLTMSTIITGVNAS) threads the bilayer. The Extracellular segment spans residues 315 to 325 (MPRVSYIKAVD). Residues 326-346 (IYLWVSFVFVFLSVLEYAAVN) traverse the membrane as a helical segment. At 347-444 (YLTTVQERKE…FQNTHAIDKY (98 aa)) the chain is on the cytoplasmic side. The helical transmembrane segment at 445 to 465 (SRLIFPASYIFFNLIYWSVFA) threads the bilayer.

This sequence belongs to the ligand-gated ion channel (TC 1.A.9) family. Gamma-aminobutyric acid receptor (TC 1.A.9.5) subfamily. GABRR2 sub-subfamily. In terms of assembly, three rho subunits (rho-1/GBRR1, rho-2/GBRR2 and rho-3/GBRR3) coassemble either to form functional homopentamers or heteropentamers. Rho-2 is unable to form a functional homopentamer. Interacts with SQSTM1.

Its subcellular location is the postsynaptic cell membrane. It is found in the cell membrane. It carries out the reaction chloride(in) = chloride(out). Functionally, rho subunit of the pentameric ligand-gated chloride channels responsible for mediating the effects of gamma-aminobutyric acid (GABA), the major inhibitory neurotransmitter in the brain. Rho-containing GABA-gated chloride channels are a subclass of GABA(A) receptors (GABAARs) entirely composed of rho subunits, where GABA molecules bind at the rho intersubunit interfaces. When activated by GABA, rho-GABAARs selectively allow the flow of chloride anions across the cell membrane down their electrochemical gradient. Rho-2 GABAARs may contribute to the regulation of glial development in the cerebellum by controlling extrasynaptic transmission. Rho-2 GABAARs are also involved in neuronal tonic (extrasynaptic) and phasic (synaptic) transmission in the Purkinje neurons of the cerebellum. Rho-2 GABAARs expressed in retina may play a role in retinal neurotransmission. This Bos taurus (Bovine) protein is Gamma-aminobutyric acid receptor subunit rho-2 (GABRR2).